Consider the following 278-residue polypeptide: 2-dehydro-3-deoxyphosphooctonate aldolase (278 aa).

The protein belongs to the KdsA family.

It is found in the cytoplasm. It catalyses the reaction D-arabinose 5-phosphate + phosphoenolpyruvate + H2O = 3-deoxy-alpha-D-manno-2-octulosonate-8-phosphate + phosphate. The protein operates within carbohydrate biosynthesis; 3-deoxy-D-manno-octulosonate biosynthesis; 3-deoxy-D-manno-octulosonate from D-ribulose 5-phosphate: step 2/3. Its pathway is bacterial outer membrane biogenesis; lipopolysaccharide biosynthesis. In Dechloromonas aromatica (strain RCB), this protein is 2-dehydro-3-deoxyphosphooctonate aldolase.